Reading from the N-terminus, the 282-residue chain is Putative 4-diphosphocytidyl-2-C-methyl-D-erythritol kinase (282 aa).

K9 is a catalytic residue. 93–103 (PVSAGLAGGSA) serves as a coordination point for ATP. The active site involves D135.

Belongs to the GHMP kinase family. IspE subfamily.

The enzyme catalyses 4-CDP-2-C-methyl-D-erythritol + ATP = 4-CDP-2-C-methyl-D-erythritol 2-phosphate + ADP + H(+). Catalyzes the phosphorylation of the position 2 hydroxy group of 4-diphosphocytidyl-2C-methyl-D-erythritol. This is Putative 4-diphosphocytidyl-2-C-methyl-D-erythritol kinase from Staphylococcus aureus (strain MSSA476).